A 182-amino-acid chain; its full sequence is Protein Syd (182 aa).

Belongs to the Syd family.

It localises to the cell inner membrane. In terms of biological role, interacts with the SecY protein in vivo. May bind preferentially to an uncomplexed state of SecY, thus functioning either as a chelating agent for excess SecY in the cell or as a regulatory factor that negatively controls the translocase function. The protein is Protein Syd of Pectobacterium atrosepticum (strain SCRI 1043 / ATCC BAA-672) (Erwinia carotovora subsp. atroseptica).